A 95-amino-acid polypeptide reads, in one-letter code: Large ribosomal subunit protein bL25 (95 aa).

This sequence belongs to the bacterial ribosomal protein bL25 family. Part of the 50S ribosomal subunit; part of the 5S rRNA/L5/L18/L25 subcomplex. Contacts the 5S rRNA. Binds to the 5S rRNA independently of L5 and L18.

Functionally, this is one of the proteins that binds to the 5S RNA in the ribosome where it forms part of the central protuberance. In Shewanella oneidensis (strain ATCC 700550 / JCM 31522 / CIP 106686 / LMG 19005 / NCIMB 14063 / MR-1), this protein is Large ribosomal subunit protein bL25.